Consider the following 558-residue polypeptide: Potassium-transporting ATPase potassium-binding subunit (558 aa).

12 helical membrane passes run 1 to 21 (MEIILFLTMMVMIAYVFSGYL), 66 to 86 (FNGFMGLITFVLLIVQQWLFL), 127 to 147 (MIVMTYLMFTSSASGYAVCIA), 166 to 186 (IVRFIVRVLLPLSCLISILLM), 245 to 265 (IWSDFIEMGSMMLLPMSMLFL), 281 to 301 (ALILFVAMFFIFIAILTLTMW), 327 to 347 (FGAGLSALFTVITTAFTTGSV), 354 to 374 (LTPLGGLGPMVLMMLNVVFGG), 377 to 397 (VGLMNLLIYVLLTVFICSLMV), 416 to 436 (IVLVFLIHPILILVFSALAFM), 482 to 502 (ISTGIIMLLSRYIPIILQLLI), and 531 to 551 (IVFIVLLSGLTFIPVLLLGPI).

It belongs to the KdpA family. As to quaternary structure, the system is composed of three essential subunits: KdpA, KdpB and KdpC.

The protein localises to the cell membrane. Functionally, part of the high-affinity ATP-driven potassium transport (or Kdp) system, which catalyzes the hydrolysis of ATP coupled with the electrogenic transport of potassium into the cytoplasm. This subunit binds the extracellular potassium ions and delivers the ions to the membrane domain of KdpB through an intramembrane tunnel. This Staphylococcus aureus (strain bovine RF122 / ET3-1) protein is Potassium-transporting ATPase potassium-binding subunit.